Consider the following 356-residue polypeptide: Branched-chain-amino-acid transaminase 1 (356 aa).

K197 bears the N6-(pyridoxal phosphate)lysine mark.

Belongs to the class-IV pyridoxal-phosphate-dependent aminotransferase family. Pyridoxal 5'-phosphate serves as cofactor.

It catalyses the reaction L-leucine + 2-oxoglutarate = 4-methyl-2-oxopentanoate + L-glutamate. It carries out the reaction L-isoleucine + 2-oxoglutarate = (S)-3-methyl-2-oxopentanoate + L-glutamate. The enzyme catalyses L-valine + 2-oxoglutarate = 3-methyl-2-oxobutanoate + L-glutamate. Its pathway is amino-acid biosynthesis; L-isoleucine biosynthesis; L-isoleucine from 2-oxobutanoate: step 4/4. It functions in the pathway amino-acid biosynthesis; L-leucine biosynthesis; L-leucine from 3-methyl-2-oxobutanoate: step 4/4. The protein operates within amino-acid biosynthesis; L-valine biosynthesis; L-valine from pyruvate: step 4/4. With respect to regulation, inhibited by canaline. Transaminates branched-chain amino acids and ketoglutarate. Involved in the final step of the methionine regeneration pathway, where ketomethiobutyrate (KMTB) is converted to methionine via a transamination. The amino donor preference is isoleucine, leucine, valine, phenylalanine, and tyrosine. This Bacillus subtilis (strain 168) protein is Branched-chain-amino-acid transaminase 1 (ilvE).